Reading from the N-terminus, the 367-residue chain is Putative ionic transporter y4hA (367 aa).

A run of 11 helical transmembrane segments spans residues Val12–Ala32, Ser39–His59, Ala74–Leu94, Val108–Gly128, Ala143–Thr163, Ala172–Val192, Leu221–Leu241, Val249–Leu269, Val291–Val311, Ala318–Ile338, and Val347–Pro367.

This sequence belongs to the Ca(2+):cation antiporter (CaCA) (TC 2.A.19) family.

The protein localises to the cell membrane. Functionally, possible cation transporter. The sequence is that of Putative ionic transporter y4hA from Sinorhizobium fredii (strain NBRC 101917 / NGR234).